The chain runs to 293 residues: Protease HtpX (293 aa).

2 helical membrane-spanning segments follow: residues 4 to 24 and 32 to 52; these read IALFLLTNLAVMVVFGLVLSL and VTGLLIMALLFGFGGSIVSLL. His-139 lines the Zn(2+) pocket. The active site involves Glu-140. His-143 lines the Zn(2+) pocket. 2 consecutive transmembrane segments (helical) span residues 158–178 and 193–213; these read VVNTFVIFISRIIAQVAAGFL and LIYFAVATVLELVFGILASII. Glu-222 lines the Zn(2+) pocket.

This sequence belongs to the peptidase M48B family. Zn(2+) serves as cofactor.

Its subcellular location is the cell inner membrane. The protein is Protease HtpX of Cronobacter sakazakii (strain ATCC BAA-894) (Enterobacter sakazakii).